Consider the following 429-residue polypeptide: Endo-1,4-beta-xylanase 1 (429 aa).

The first 19 residues, 1-19, serve as a signal peptide directing secretion; that stretch reads MQTKSILTAALLAAAPASA. The GH10 domain occupies 43–336; the sequence is NSDQQYNRIL…KPAWTSISSV (294 aa). Glu-150 functions as the Proton donor in the catalytic mechanism. The Nucleophile role is filled by Glu-257. A disulfide bridge links Cys-286 with Cys-292. A disordered region spans residues 364 to 395; that stretch reads TTPPPISSPIVPSTTTTSAVPTTTVSPPEPEQ. The segment covering 371–389 has biased composition (low complexity); it reads SPIVPSTTTTSAVPTTTVS. The 37-residue stretch at 393–429 folds into the CBM1 domain; that stretch reads PEQTRWGQCGGIGWNGPTKCQSPWTCTRLNDWYFQCL.

Belongs to the glycosyl hydrolase 10 (cellulase F) family.

It localises to the secreted. It carries out the reaction Endohydrolysis of (1-&gt;4)-beta-D-xylosidic linkages in xylans.. It functions in the pathway glycan degradation; xylan degradation. Endo-1,4-beta-xylanase involved in the hydrolysis of xylan, a major structural heterogeneous polysaccharide found in plant biomass representing the second most abundant polysaccharide in the biosphere, after cellulose. The protein is Endo-1,4-beta-xylanase 1 of Humicola insolens (Soft-rot fungus).